We begin with the raw amino-acid sequence, 337 residues long: Putative olfactory receptor 1F12P (337 aa).

Over 1 to 25 (MEGKNQTNISEFLLLGFSSWQQQQV) the chain is Extracellular. N-linked (GlcNAc...) asparagine glycosylation is found at Asn5 and Asn8. Residues 26 to 49 (LLFALFLCLYLTGLFGNLLILLAI) traverse the membrane as a helical segment. At 50–57 (GSDHCLHT) the chain is on the cytoplasmic side. A helical membrane pass occupies residues 58–79 (PMYFFLANLSLVDLCLPSATVP). The Extracellular segment spans residues 80-100 (KMLLNIQTQTQTISYPGCLAQ). Residues Cys97 and Cys189 are joined by a disulfide bond. A helical membrane pass occupies residues 101 to 120 (MYFCMMFANMDNFLLTVMAY). The Cytoplasmic segment spans residues 121 to 139 (DRYVAICHPLHYSTIMALR). A helical membrane pass occupies residues 140–158 (LCASLVAAPWVIAILNPLL). Topologically, residues 159–196 (HTLMMAHLHFCSDNVIHHFFCDINSLLPLSCSDTSLNQ) are extracellular. The chain crosses the membrane as a helical span at residues 197-219 (LSVLATVGLIFVVPSVCILVSYI). The Cytoplasmic segment spans residues 220–236 (LIVSAVMKVPSAQGKLK). A helical transmembrane segment spans residues 237 to 259 (AFSTCGSHLALVILFYGAITGVY). Topologically, residues 260–272 (MSPLSNHSTEKDS) are extracellular. N-linked (GlcNAc...) asparagine glycosylation occurs at Asn265. The chain crosses the membrane as a helical span at residues 273–292 (AASVIFMVVAPVLNPFIYSL). At 293–337 (RNNELKGTLKKTLSRPGAVAHACNPSTLGGRGGWIMRSGDRDHPG) the chain is on the cytoplasmic side.

It belongs to the G-protein coupled receptor 1 family.

It localises to the cell membrane. Functionally, odorant receptor. The chain is Putative olfactory receptor 1F12P from Homo sapiens (Human).